The following is a 450-amino-acid chain: Glucose-6-phosphate isomerase (450 aa).

Thr39 is subject to Phosphothreonine. Glu291 acts as the Proton donor in catalysis. Catalysis depends on residues His312 and Lys426.

Belongs to the GPI family.

It localises to the cytoplasm. The catalysed reaction is alpha-D-glucose 6-phosphate = beta-D-fructose 6-phosphate. It participates in carbohydrate biosynthesis; gluconeogenesis. The protein operates within carbohydrate degradation; glycolysis; D-glyceraldehyde 3-phosphate and glycerone phosphate from D-glucose: step 2/4. Catalyzes the reversible isomerization of glucose-6-phosphate to fructose-6-phosphate. This Halalkalibacterium halodurans (strain ATCC BAA-125 / DSM 18197 / FERM 7344 / JCM 9153 / C-125) (Bacillus halodurans) protein is Glucose-6-phosphate isomerase.